Consider the following 118-residue polypeptide: Large ribosomal subunit protein bL19 (118 aa).

This sequence belongs to the bacterial ribosomal protein bL19 family.

This protein is located at the 30S-50S ribosomal subunit interface and may play a role in the structure and function of the aminoacyl-tRNA binding site. This is Large ribosomal subunit protein bL19 from Helicobacter pylori (strain P12).